Consider the following 527-residue polypeptide: Protein SDS24 (527 aa).

Composition is skewed to low complexity over residues 1-22 (MAST…LPTS) and 55-74 (TPPT…TPAP). The interval 1-75 (MASTSNTFPP…PGCAATPAPL (75 aa)) is disordered. Residue S94 is modified to Phosphoserine. CBS domains lie at 114-175 (IEQN…KITV), 198-256 (LTPK…NARS), 283-342 (TSRQ…QYPL), and 443-512 (LNSH…GNKE). Low complexity predominate over residues 424 to 447 (AQSSANGATPMSKSSSSTSLNSHS). 2 disordered regions span residues 424–478 (AQSS…TNTP) and 508–527 (TGNK…SIAM). Residues S458 and S524 each carry the phosphoserine modification.

This sequence belongs to the SDS23 family.

Its subcellular location is the cytoplasm. The protein localises to the nucleus. In terms of biological role, involved in DNA replication and cell separation during budding. The protein is Protein SDS24 (SDS24) of Saccharomyces cerevisiae (strain YJM789) (Baker's yeast).